Here is a 139-residue protein sequence, read N- to C-terminus: Actin-depolymerizing factor 3 (139 aa).

One can recognise an ADF-H domain in the interval 5-139 (ASGMAVHDDC…DLDVFKSRAN (135 aa)). Residue Ser-6 is modified to Phosphoserine.

This sequence belongs to the actin-binding proteins ADF family.

The protein localises to the cytoplasm. It is found in the cytoskeleton. Functionally, actin-depolymerizing protein. Severs actin filaments (F-actin) and binds to actin monomers. The chain is Actin-depolymerizing factor 3 (ADF3) from Arabidopsis thaliana (Mouse-ear cress).